The chain runs to 495 residues: MKKRKELNALIGLAGDSRRKKPKKGPSSHRLLRTEPPDSDSESSSEEEEEFGVVGNRSRFAKGDYLRCCKICYPLCGFVILAACVVACVGLVWMQVALKEDLDALKEKFRTMESNQKSSFQEIPKLNEELLSKQKQLEKIESGEMGLNKVWINITEMNKQISLLTSAVNHLKANVKSAADLISLPTTVEGLQKSVASIGNTLNSVHLAVEALQKTVDEHKKTMELLQSDMNQHFLKETPGSNQIIPSPSATSELDNKTHSENLKQDILYLHNSLEEVNSALVGYQRQNDLKLEGMNETVSNLTQRVNLIESDVVAMSKVEKKANLSFSMMGDRSATLKRQSLDQVTNRTDTVKIQSIKKEDSSNSQVSKLREKLQLISALTNKPESNRPPETADEEQVESFTSKPSALPKFSQFLGDPVEKAAQLRPISLPGVSSTEDLQDLFRKTGQDVDGKLTYQEIWTSLGSAMPEPESLRAFDSDGDGRYSFLELRVALGI.

Disordered stretches follow at residues 1–50 (MKKR…EEEE) and 381–404 (TNKP…FTSK). S17 is subject to Phosphoserine. A compositionally biased stretch (basic residues) spans 18-31 (RRKKPKKGPSSHRL). Residues 37 to 50 (PDSDSESSSEEEEE) show a composition bias toward acidic residues. EF-hand domains follow at residues 434-463 (SSTE…WTSL) and 464-495 (GSAM…ALGI). Residues D477, D479, D481, R483, and E488 each contribute to the Ca(2+) site.

This Homo sapiens (Human) protein is EF-hand calcium-binding domain-containing protein 14 (EFCAB14).